A 251-amino-acid polypeptide reads, in one-letter code: uncharacterized protein (251 aa).

To M.jannaschii MJ1311.

This is an uncharacterized protein from Methanocaldococcus jannaschii (strain ATCC 43067 / DSM 2661 / JAL-1 / JCM 10045 / NBRC 100440) (Methanococcus jannaschii).